Reading from the N-terminus, the 310-residue chain is Porphobilinogen deaminase (310 aa).

Cys236 is subject to S-(dipyrrolylmethanemethyl)cysteine.

This sequence belongs to the HMBS family. Monomer. It depends on dipyrromethane as a cofactor.

The catalysed reaction is 4 porphobilinogen + H2O = hydroxymethylbilane + 4 NH4(+). The protein operates within porphyrin-containing compound metabolism; protoporphyrin-IX biosynthesis; coproporphyrinogen-III from 5-aminolevulinate: step 2/4. In terms of biological role, tetrapolymerization of the monopyrrole PBG into the hydroxymethylbilane pre-uroporphyrinogen in several discrete steps. This Nitratiruptor sp. (strain SB155-2) protein is Porphobilinogen deaminase.